We begin with the raw amino-acid sequence, 517 residues long: Phenol 2-monooxygenase, oxygenase component DmpN (517 aa).

Fe cation-binding residues include E109, E139, H142, E200, E234, and H237.

It belongs to the TmoA/XamoA family. In terms of assembly, the multicomponent enzyme phenol hydroxylase is formed by DmpL (P1 component), DmpM (P2 component), DmpN (P3 component), DmpO (P4 component) and DmpP (P5 component). The oxygenase component is a dimer composed of three subunits, DmpL, DmpN and DmpO (DmpLNO). DmpN interacts with the auxiliary protein DmpK (P0 component). Requires Fe(2+) as cofactor.

The enzyme catalyses phenol + NADH + O2 + H(+) = catechol + NAD(+) + H2O. The protein operates within aromatic compound metabolism; phenol degradation. With respect to regulation, requires DmpM for efficient turnover. The activity of DmpLNO oxygenase is inhibited by dithiothreitol (DTT) by a mechanism apparently involving H(2)O(2) generation. Functionally, part of a multicomponent enzyme which catalyzes the degradation of phenol and some of its methylated derivatives. DmpL, DmpN and DmpO form the oxygenase component of the complex. Required for growth on phenol and for in vitro phenol hydroxylase activity. This is Phenol 2-monooxygenase, oxygenase component DmpN from Pseudomonas sp. (strain CF600).